Here is a 320-residue protein sequence, read N- to C-terminus: ATP-dependent 6-phosphofructokinase (320 aa).

G11 is an ATP binding site. 21–25 (RAVVR) lines the ADP pocket. Residues 72 to 73 (RY) and 102 to 105 (GDGS) contribute to the ATP site. Position 103 (D103) interacts with Mg(2+). Residue 125-127 (TID) coordinates substrate. Catalysis depends on D127, which acts as the Proton acceptor. Residue R154 participates in ADP binding. Substrate contacts are provided by residues R162 and 169–171 (MGR). Residues 185–187 (GAD), R211, and 213–215 (KKH) contribute to the ADP site. Residues E222, R243, and 249–252 (HVVR) contribute to the substrate site.

Belongs to the phosphofructokinase type A (PFKA) family. ATP-dependent PFK group I subfamily. Prokaryotic clade 'B1' sub-subfamily. Homotetramer. It depends on Mg(2+) as a cofactor.

The protein localises to the cytoplasm. The enzyme catalyses beta-D-fructose 6-phosphate + ATP = beta-D-fructose 1,6-bisphosphate + ADP + H(+). It participates in carbohydrate degradation; glycolysis; D-glyceraldehyde 3-phosphate and glycerone phosphate from D-glucose: step 3/4. Allosterically activated by ADP and other diphosphonucleosides, and allosterically inhibited by phosphoenolpyruvate. Functionally, catalyzes the phosphorylation of D-fructose 6-phosphate to fructose 1,6-bisphosphate by ATP, the first committing step of glycolysis. The protein is ATP-dependent 6-phosphofructokinase of Enterococcus faecalis (strain ATCC 700802 / V583).